We begin with the raw amino-acid sequence, 827 residues long: Leucine--tRNA ligase (827 aa).

The short motif at 42 to 52 (PYPSGKLHMGH) is the 'HIGH' region element. The 'KMSKS' region signature appears at 583-587 (KMSKS). K586 is a binding site for ATP.

Belongs to the class-I aminoacyl-tRNA synthetase family.

The protein resides in the cytoplasm. The catalysed reaction is tRNA(Leu) + L-leucine + ATP = L-leucyl-tRNA(Leu) + AMP + diphosphate. The polypeptide is Leucine--tRNA ligase (Pelotomaculum thermopropionicum (strain DSM 13744 / JCM 10971 / SI)).